A 602-amino-acid polypeptide reads, in one-letter code: MTSTPLDKIRNFSIVAHIDHGKSTLSDRLIQTTGGLTAREMSAQVLDNMDIEKERGITIKAQTVRLTYKAADGETYILNLMDTPGHVDFAYEVSRSLAACEGSILVVDASQGVEAQTLANVYQAIDNNHEIVPVLNKVDLPAADVDRVKAQIEDVIGLDASDAVECSAKTGVGIPEVLEAIVTRLPPPKGDPNAPLKALLVDAWYDAYLGVVVLVRIFDGSLKAGQQVRMMQTGATHRIDKVGVFTPKATDVEYLGPGEVGFFTASIKEVADAAVGDTITDEKKPTAEALKGFKEVVPVVFCGLFPVDAADFEDLRAAVGKLRLNDASFTYEMESSAALGFGFRCGFLGLLHLEIIQERLSREFDLDLIATAPSVVYKIKLRNGDEIELHNPADLPDVMQIEEIAEPWIKATIFTPDDYLGGVIKLCQDRRGMQRELSYVGSRAMVVYDLPLNEVVFDFYDRLKSISKGYASFDYQLEDYRAGDLVKMSILVNSEPVDALSMLVHRSRAESRGRGMCEKMKELIPQHMFVIPIQAAIGGRIIARETVRALRKDVTAKCYGGDASRKKKLLEKQKEGKKRMRQFGKVEIPQEAFIAALKMDED.

Residues 7-189 form the tr-type G domain; sequence DKIRNFSIVA…AIVTRLPPPK (183 aa). GTP contacts are provided by residues 19–24 and 136–139; these read DHGKST and NKVD.

The protein belongs to the TRAFAC class translation factor GTPase superfamily. Classic translation factor GTPase family. LepA subfamily.

The protein resides in the cell inner membrane. It catalyses the reaction GTP + H2O = GDP + phosphate + H(+). Functionally, required for accurate and efficient protein synthesis under certain stress conditions. May act as a fidelity factor of the translation reaction, by catalyzing a one-codon backward translocation of tRNAs on improperly translocated ribosomes. Back-translocation proceeds from a post-translocation (POST) complex to a pre-translocation (PRE) complex, thus giving elongation factor G a second chance to translocate the tRNAs correctly. Binds to ribosomes in a GTP-dependent manner. This Caulobacter vibrioides (strain NA1000 / CB15N) (Caulobacter crescentus) protein is Elongation factor 4.